We begin with the raw amino-acid sequence, 142 residues long: Hemoglobin larval subunit alpha (142 aa).

A Globin domain is found at 2 to 142 (VLSAEEKALV…VSAVLTSKYR (141 aa)). His59 is an O2 binding site. His88 contacts heme b.

Belongs to the globin family. Heterotetramer of two alpha chains and two beta chains. In terms of tissue distribution, red blood cells.

Involved in oxygen transport from the lung to the various peripheral tissues. The chain is Hemoglobin larval subunit alpha from Pleurodeles waltl (Iberian ribbed newt).